The following is a 103-amino-acid chain: Spherulin-3A (103 aa).

Positions Met-1–Lys-13 are N-terminal arm. Beta/gamma crystallin 'Greek key' domains lie at Gly-14–Pro-55 and Thr-57–Thr-99.

This sequence belongs to the beta/gamma-crystallin family.

The protein localises to the cytoplasm. Structural protein. The protein is Spherulin-3A of Physarum polycephalum (Slime mold).